We begin with the raw amino-acid sequence, 236 residues long: V-set and transmembrane domain-containing protein 1 (236 aa).

Positions 1–16 are cleaved as a signal peptide; it reads MTAEFLSLLCLGLCLG. The Extracellular portion of the chain corresponds to 17-135; the sequence is YEDEKKNEKP…APSMKTDTRT (119 aa). An Ig-like V-type domain is found at 27 to 114; sequence PKPSLHAWPS…EWSESSEHLQ (88 aa). Residues Asn-44 and Asn-55 are each glycosylated (N-linked (GlcNAc...) asparagine). An intrachain disulfide couples Cys-49 to Cys-96. The chain crosses the membrane as a helical span at residues 136-156; the sequence is IFVAIFSCISILLLFLSVFII. Residues 157-236 are Cytoplasmic-facing; sequence YRCSQHSSSS…GSHEYAALKV (80 aa). The disordered stretch occupies residues 166 to 200; the sequence is SEESTKRTSHSKLPEQEAAEADLSNMERVSLSTAD. 2 short sequence motifs (ITIM motif) span residues 204-209 and 229-234; these read VTYAEL and HEYAAL. The segment at 215 to 236 is disordered; the sequence is SEAASDTTQEPPGSHEYAALKV.

In terms of processing, isoform 2 is N-glycosylated. In terms of tissue distribution, expressed on myeloid (neutrophils, eosinophils and monocytes) but not on lymphoid cells.

It is found in the membrane. Its subcellular location is the secreted. In terms of biological role, behaves as a cytokine, promoting IL17A secretion by CD4+ T-cells, and differentiation and activation of IL17 producing helper T-cells (TH17). Its function is as follows. Inhibitory immune receptor involved in the regulation of phagocytes. In Homo sapiens (Human), this protein is V-set and transmembrane domain-containing protein 1 (VSTM1).